The chain runs to 101 residues: Small ribosomal subunit protein uS14 (101 aa).

The protein belongs to the universal ribosomal protein uS14 family. As to quaternary structure, part of the 30S ribosomal subunit. Contacts proteins S3 and S10.

Binds 16S rRNA, required for the assembly of 30S particles and may also be responsible for determining the conformation of the 16S rRNA at the A site. This is Small ribosomal subunit protein uS14 from Marinobacter nauticus (strain ATCC 700491 / DSM 11845 / VT8) (Marinobacter aquaeolei).